The primary structure comprises 637 residues: GTPase-activating protein GYP1 (637 aa).

A compositionally biased stretch (basic and acidic residues) spans 1-17; that stretch reads MGVRSAAKEMHERDHNS. Disordered stretches follow at residues 1-152 and 187-233; these read MGVR…GDRY and RTLS…NDSK. Residues 18–27 show a composition bias toward polar residues; the sequence is DSSSLVTSLM. The span at 28–45 shows a compositional bias: low complexity; the sequence is KSWRISSASSSKKPSLYK. The span at 46 to 59 shows a compositional bias: polar residues; that stretch reads MNTTESTSLPSGYA. Serine 69 is subject to Phosphoserine. Composition is skewed to polar residues over residues 79–91 and 98–107; these read QQASTRRTSNSYS and PTLSTASNES. Positions 115–127 are enriched in basic residues; that stretch reads RQHHQRHHHHQQP. Composition is skewed to low complexity over residues 128–142 and 187–207; these read RHSSSGSVGNNCSNS and RTLSRKSTSSSINSISNMGTS. The span at 208–223 shows a compositional bias: polar residues; that stretch reads AVRNSSSSFTYPQLPQ. A Phosphoserine modification is found at serine 250. The 229-residue stretch at 280–508 folds into the Rab-GAP TBC domain; that stretch reads GIPKIHRPVV…RMWDTYLSET (229 aa). The disordered stretch occupies residues 543–564; it reads DFQSPTTALSNMTPNNAVEDSG.

Its subcellular location is the golgi apparatus. It localises to the golgi stack. GTPase-activating protein (GAP) that stimulates specifically the intrinsic GTPase activity of Ypt/Rab-type GTPases YPT1 and YPT7. Functions on the Golgi as a negative regulator of YPT1. Functions on the vacuole as a negative regulator of YPT7. It is also active on SEC4 and YPT51. Provides a catalytic arginine (arginine finger) and glutamine (glutamine finger) in trans to accelerate the GTP hydrolysis rate of the substrate GTPase. This chain is GTPase-activating protein GYP1 (GYP1), found in Saccharomyces cerevisiae (strain ATCC 204508 / S288c) (Baker's yeast).